Here is a 773-residue protein sequence, read N- to C-terminus: Acyl-homoserine lactone acylase PvdQ (773 aa).

A signal peptide spans 1-23 (MSRALPGFLFAGLSVAVVLPAQA). The propeptide at 200–221 (SQQVQALQLAAARNERFALERG) is spacer peptide. Catalysis depends on S222, which acts as the Nucleophile.

Belongs to the peptidase S45 family. In terms of assembly, heterodimer of an alpha subunit and a beta subunit processed from the same precursor.

The protein localises to the periplasm. The enzyme catalyses an N-acyl-L-homoserine lactone + H2O = L-homoserine lactone + a carboxylate. Its function is as follows. Catalyzes the deacylation of acyl-homoserine lactone (AHL or acyl-HSL), releasing homoserine lactone (HSL) and the corresponding fatty acid. Possesses a specificity for the degradation of long-chain acyl-HSLs (side chains of 11 to 14 carbons in length). This is Acyl-homoserine lactone acylase PvdQ (pvdQ) from Pseudomonas syringae pv. tomato (strain ATCC BAA-871 / DC3000).